The sequence spans 558 residues: NAD(P)H-quinone oxidoreductase chain 4 (558 aa).

The next 14 membrane-spanning stretches (helical) occupy residues 25-45 (FPWLSLSILFPIFGSLVVPFI), 56-76 (WYALGIALVTFLITVGAYLKG), 111-131 (LILLTSFITALAVLAAWPVSF), 133-153 (PKLFFFLILAMDGGQIAVFAV), 157-177 (LLFFLAWELELLPVYLLLAIW), 189-209 (FIIYTAGSSLFILLAALAMGF), 230-250 (GFQLLCYGGLLIAFGVKLPVV), 264-284 (TAPVHMLLAGILLKMGGYALL), 298-318 (FAPLLIVLGVVNIIYAALTSF), 327-347 (IAYSSISHMGFVLIGIGSFSS), 353-373 (AMLQMVSHGLIGASLFFLVGA), 395-417 (IMFALWTTCSLASLALPGMSGFV), 438-458 (IVIAGLAAIGVILTPIYLLSM), and 485-505 (IYVIGSLLVPIIGIGLYPRIM).

The protein belongs to the complex I subunit 4 family.

It is found in the cellular thylakoid membrane. The catalysed reaction is a plastoquinone + NADH + (n+1) H(+)(in) = a plastoquinol + NAD(+) + n H(+)(out). It carries out the reaction a plastoquinone + NADPH + (n+1) H(+)(in) = a plastoquinol + NADP(+) + n H(+)(out). NDH-1 shuttles electrons from NAD(P)H, via FMN and iron-sulfur (Fe-S) centers, to quinones in the respiratory chain. The immediate electron acceptor for the enzyme in this species is believed to be plastoquinone. Couples the redox reaction to proton translocation (for every two electrons transferred, four hydrogen ions are translocated across the cytoplasmic membrane), and thus conserves the redox energy in a proton gradient. The polypeptide is NAD(P)H-quinone oxidoreductase chain 4 (Prochlorococcus marinus (strain MIT 9211)).